Consider the following 130-residue polypeptide: Histone H2A type 1-B/E (130 aa).

Residues 1 to 22 (MSGRGKQGGKARAKAKTRSSRA) are disordered. Ser2 is subject to N-acetylserine. Ser2 is modified (phosphoserine; by RPS6KA5). Arg4 is subject to Citrulline; alternate. The residue at position 4 (Arg4) is a Symmetric dimethylarginine; by PRMT5; alternate. 2 positions are modified to N6-(2-hydroxyisobutyryl)lysine; alternate: Lys6 and Lys10. An N6-acetyllysine; alternate modification is found at Lys6. Basic residues predominate over residues 7–19 (QGGKARAKAKTRS). N6-(beta-hydroxybutyryl)lysine; alternate is present on residues Lys10 and Lys14. Lys10 carries the post-translational modification N6-lactoyllysine; alternate. Residue Lys10 is modified to N6-succinyllysine; alternate. Lys14 participates in a covalent cross-link: Glycyl lysine isopeptide (Lys-Gly) (interchain with G-Cter in ubiquitin); alternate. Residue Lys16 forms a Glycyl lysine isopeptide (Lys-Gly) (interchain with G-Cter in ubiquitin) linkage. Lys37 is modified (N6-(2-hydroxyisobutyryl)lysine; alternate). An N6-(beta-hydroxybutyryl)lysine; alternate modification is found at Lys37. Lys37 bears the N6-crotonyllysine; alternate mark. Residues Lys75 and Lys76 each carry the N6-(2-hydroxyisobutyryl)lysine modification. At Lys96 the chain carries N6-(2-hydroxyisobutyryl)lysine; alternate. Lys96 carries the N6-(beta-hydroxybutyryl)lysine; alternate modification. The residue at position 96 (Lys96) is an N6-succinyllysine; alternate. At Lys96 the chain carries N6-glutaryllysine; alternate. Gln105 bears the N5-methylglutamine mark. At Lys119 the chain carries N6-(2-hydroxyisobutyryl)lysine; alternate. Residue Lys119 is modified to N6-(beta-hydroxybutyryl)lysine; alternate. N6-crotonyllysine; alternate occurs at positions 119 and 120. 2 positions are modified to N6-glutaryllysine; alternate: Lys119 and Lys120. Residue Lys120 forms a Glycyl lysine isopeptide (Lys-Gly) (interchain with G-Cter in ubiquitin); alternate linkage. Thr121 carries the phosphothreonine; by DCAF1 modification. Position 126 is an N6-crotonyllysine; alternate (Lys126). Lys126 carries the post-translational modification N6-glutaryllysine; alternate.

This sequence belongs to the histone H2A family. The nucleosome is a histone octamer containing two molecules each of H2A, H2B, H3 and H4 assembled in one H3-H4 heterotetramer and two H2A-H2B heterodimers. The octamer wraps approximately 147 bp of DNA. In terms of processing, deiminated on Arg-4 in granulocytes upon calcium entry. Post-translationally, monoubiquitination of Lys-120 (H2AK119Ub) by RING1, TRIM37 and RNF2/RING2 complex gives a specific tag for epigenetic transcriptional repression and participates in X chromosome inactivation of female mammals. It is involved in the initiation of both imprinted and random X inactivation. Ubiquitinated H2A is enriched in inactive X chromosome chromatin. Ubiquitination of H2A functions downstream of methylation of 'Lys-27' of histone H3 (H3K27me). H2AK119Ub by RNF2/RING2 can also be induced by ultraviolet and may be involved in DNA repair. Monoubiquitination of Lys-120 (H2AK119Ub) by TRIM37 may promote transformation of cells in a number of breast cancers. Following DNA double-strand breaks (DSBs), it is ubiquitinated through 'Lys-63' linkage of ubiquitin moieties by the E2 ligase UBE2N and the E3 ligases RNF8 and RNF168, leading to the recruitment of repair proteins to sites of DNA damage. Ubiquitination at Lys-14 and Lys-16 (H2AK13Ub and H2AK15Ub, respectively) in response to DNA damage is initiated by RNF168 that mediates monoubiquitination at these 2 sites, and 'Lys-63'-linked ubiquitin are then conjugated to monoubiquitin; RNF8 is able to extend 'Lys-63'-linked ubiquitin chains in vitro. Deubiquitinated by USP51 at Lys-14 and Lys-16 (H2AK13Ub and H2AK15Ub, respectively) after damaged DNA is repaired. H2AK119Ub and ionizing radiation-induced 'Lys-63'-linked ubiquitination (H2AK13Ub and H2AK15Ub) are distinct events. Phosphorylation on Ser-2 (H2AS1ph) is enhanced during mitosis. Phosphorylation on Ser-2 by RPS6KA5/MSK1 directly represses transcription. Acetylation of H3 inhibits Ser-2 phosphorylation by RPS6KA5/MSK1. Phosphorylation at Thr-121 (H2AT120ph) by DCAF1 is present in the regulatory region of many tumor suppresor genes and down-regulates their transcription. In terms of processing, glutamine methylation at Gln-105 (H2AQ104me) by FBL is specifically dedicated to polymerase I. It is present at 35S ribosomal DNA locus and impairs binding of the FACT complex. Post-translationally, symmetric dimethylation on Arg-4 by the PRDM1/PRMT5 complex may play a crucial role in the germ-cell lineage. Crotonylation (Kcr) is specifically present in male germ cells and marks testis-specific genes in post-meiotic cells, including X-linked genes that escape sex chromosome inactivation in haploid cells. Crotonylation marks active promoters and enhancers and confers resistance to transcriptional repressors. It is also associated with post-meiotically activated genes on autosomes. In terms of processing, lactylated in macrophages by EP300/P300 by using lactoyl-CoA directly derived from endogenous or exogenous lactate, leading to stimulates gene transcription.

The protein localises to the nucleus. Its subcellular location is the chromosome. Functionally, core component of nucleosome. Nucleosomes wrap and compact DNA into chromatin, limiting DNA accessibility to the cellular machineries which require DNA as a template. Histones thereby play a central role in transcription regulation, DNA repair, DNA replication and chromosomal stability. DNA accessibility is regulated via a complex set of post-translational modifications of histones, also called histone code, and nucleosome remodeling. This Homo sapiens (Human) protein is Histone H2A type 1-B/E.